The following is a 200-amino-acid chain: General odorant-binding protein 70 (200 aa).

A signal peptide spans 1–29 (MRRQYSMWASTVAVIACGSALMLLHPVGA). 2 disulfide bridges follow: Cys105-Cys174 and Cys152-Cys183.

This sequence belongs to the PBP/GOBP family.

The protein resides in the secreted. Its function is as follows. Present in the aqueous fluid surrounding olfactory sensory dendrites and are thought to aid in the capture and transport of hydrophobic odorants into and through this fluid. The polypeptide is General odorant-binding protein 70 (Obp70) (Anopheles gambiae (African malaria mosquito)).